Here is an 877-residue protein sequence, read N- to C-terminus: Potassium transporter 23 (877 aa).

Disordered regions lie at residues 1 to 60 (MDDD…SLDG) and 72 to 92 (ASAG…RASS). Topologically, residues 1–126 (MDDDDSGIQE…RGAHGHSSKE (126 aa)) are cytoplasmic. Positions 12 to 28 (PAPPPPPPPPPPPPPPL) are enriched in pro residues. Gly residues predominate over residues 76–86 (GASGGGGGGGP). A helical transmembrane segment spans residues 127–147 (ISMLSTVAMAFQTLGVVYGDM). At 148 to 173 (GTSPLYVFSDVFSKVPIKSEVEILGA) the chain is on the extracellular side. Residues 174 to 194 (LSLVMYTIALIPFAKYVFIVL) traverse the membrane as a helical segment. The Cytoplasmic portion of the chain corresponds to 195 to 260 (KANDNGEGGT…SLEKNPVFKN (66 aa)). A helical membrane pass occupies residues 261–281 (ILLFLVLMGTSMVIGDGILTP). Residues 282 to 295 (SMSVMSAVSGLQGR) lie on the Extracellular side of the membrane. The chain crosses the membrane as a helical span at residues 296–316 (VPGFGTDAVVIVSILFLVLLF). Residues 317 to 325 (SVQRFGTGK) lie on the Cytoplasmic side of the membrane. Residues 326–346 (VGFMFAPILALWFINLGTIGI) traverse the membrane as a helical segment. Over 347–379 (YNLAKYDISVVRAFNPVYIYLFFQTNGIKAWSA) the chain is Extracellular. Residues 380–400 (LGGCVLCITGAEAMFADLGHF) form a helical membrane-spanning segment. The Cytoplasmic portion of the chain corresponds to 401–406 (SVKSIQ). The chain crosses the membrane as a helical span at residues 407-427 (VAFTAVVFPCLLIAYMGQAAY). The Extracellular portion of the chain corresponds to 428 to 441 (LMKYPFAVERIFYD). Residues 442–462 (SVPEILFWPVFVIATLAAMIA) traverse the membrane as a helical segment. Over 463–498 (SQAMISATFSCIKQAMALGCFPRIKIIHTSKKVMGQ) the chain is Cytoplasmic. A helical membrane pass occupies residues 499-519 (IYIPVMNWFLMVMCIIIVATF). At 520 to 524 (RSTND) the chain is on the extracellular side. The chain crosses the membrane as a helical span at residues 525–545 (IANAYGIAEVGVMMVSTALVT). The Cytoplasmic portion of the chain corresponds to 546–555 (LVMLLIWQTN). Residues 556–578 (LFLVMCFPVIFGSVEFVYLTAVL) form a helical membrane-spanning segment. Residues 579–583 (SKIQE) are Extracellular-facing. A helical transmembrane segment spans residues 584-604 (GGWLPLAFSSLFLCIMYTWNY). The Cytoplasmic segment spans residues 605–877 (GSVLKYQSEM…IMRVGMTYMV (273 aa)).

Belongs to the HAK/KUP transporter (TC 2.A.72.3) family.

The protein resides in the membrane. Its function is as follows. High-affinity potassium transporter. This is Potassium transporter 23 (HAK23) from Oryza sativa subsp. japonica (Rice).